Reading from the N-terminus, the 648-residue chain is Dystrotelin (648 aa).

The ZZ-type zinc finger occupies 223–279 (QHRVHCHACKAFPITGLRYRCLKCLNVHLCQSCFLTERRSRKHKPSHSVLEYCTQPS). Residues Cys228, Cys231, Cys243, Cys246, Cys252, Cys255, His265, and His269 each coordinate Zn(2+). Residues 367 to 446 (QRETAELQKD…LDTVRHLLSL (80 aa)) adopt a coiled-coil conformation. The span at 455-474 (SHSNLQLEQDGSINENNWTQ) shows a compositional bias: polar residues. Disordered regions lie at residues 455 to 509 (SHSN…DTLY) and 536 to 557 (QREE…EGLP). The segment covering 479 to 502 (KPHESSSTEHEVEERGTRQERRFE) has biased composition (basic and acidic residues). A compositionally biased stretch (acidic residues) spans 538–548 (EEEELQEEEEG).

Its subcellular location is the cell membrane. The sequence is that of Dystrotelin (dytn) from Danio rerio (Zebrafish).